The sequence spans 376 residues: WD repeat-containing protein 86 (376 aa).

WD repeat units lie at residues 13–52, 55–94, 95–132, 135–188, 191–232, 234–272, 274–310, and 313–350; these read DHRG…CCAL, GHES…QVYR, GHTS…MSRE, GHRN…CHQT, GHTG…RVFR, HRGS…RTFT, HRRN…LRRV, and GHTF…GAPR.

In Homo sapiens (Human), this protein is WD repeat-containing protein 86 (WDR86).